The chain runs to 236 residues: Leucyl/phenylalanyl-tRNA--protein transferase (236 aa).

It belongs to the L/F-transferase family.

The protein resides in the cytoplasm. The catalysed reaction is N-terminal L-lysyl-[protein] + L-leucyl-tRNA(Leu) = N-terminal L-leucyl-L-lysyl-[protein] + tRNA(Leu) + H(+). It carries out the reaction N-terminal L-arginyl-[protein] + L-leucyl-tRNA(Leu) = N-terminal L-leucyl-L-arginyl-[protein] + tRNA(Leu) + H(+). The enzyme catalyses L-phenylalanyl-tRNA(Phe) + an N-terminal L-alpha-aminoacyl-[protein] = an N-terminal L-phenylalanyl-L-alpha-aminoacyl-[protein] + tRNA(Phe). Functionally, functions in the N-end rule pathway of protein degradation where it conjugates Leu, Phe and, less efficiently, Met from aminoacyl-tRNAs to the N-termini of proteins containing an N-terminal arginine or lysine. The chain is Leucyl/phenylalanyl-tRNA--protein transferase from Shewanella pealeana (strain ATCC 700345 / ANG-SQ1).